The following is a 26-amino-acid chain: uncharacterized protein (26 aa).

This is an uncharacterized protein from Escherichia coli (strain K12).